The sequence spans 347 residues: N-acetyl-gamma-glutamyl-phosphate reductase (347 aa).

The active site involves Cys-151.

It belongs to the NAGSA dehydrogenase family. Type 1 subfamily.

The protein localises to the cytoplasm. The catalysed reaction is N-acetyl-L-glutamate 5-semialdehyde + phosphate + NADP(+) = N-acetyl-L-glutamyl 5-phosphate + NADPH + H(+). The protein operates within amino-acid biosynthesis; L-arginine biosynthesis; N(2)-acetyl-L-ornithine from L-glutamate: step 3/4. Its function is as follows. Catalyzes the NADPH-dependent reduction of N-acetyl-5-glutamyl phosphate to yield N-acetyl-L-glutamate 5-semialdehyde. This is N-acetyl-gamma-glutamyl-phosphate reductase from Corynebacterium diphtheriae (strain ATCC 700971 / NCTC 13129 / Biotype gravis).